Reading from the N-terminus, the 116-residue chain is Cyclin-dependent protein kinase inhibitor SMR9 (116 aa).

Positions 1-22 (MASKGKKPLRRTTTRRRKRSHF) are enriched in basic residues. Residues 1–62 (MASKGKKPLR…PVSAESGCCT (62 aa)) form a disordered region. A compositionally biased stretch (low complexity) spans 35-56 (VTSTSSTSTSPTSTATPSPVSA).

Functionally, probable cyclin-dependent protein kinase (CDK) inhibitor that functions as a repressor of mitosis in the endoreduplication cell cycle. This chain is Cyclin-dependent protein kinase inhibitor SMR9, found in Arabidopsis thaliana (Mouse-ear cress).